We begin with the raw amino-acid sequence, 474 residues long: ATP synthase subunit beta (474 aa).

151–158 is a binding site for ATP; the sequence is GGAGVGKT.

This sequence belongs to the ATPase alpha/beta chains family. In terms of assembly, F-type ATPases have 2 components, CF(1) - the catalytic core - and CF(0) - the membrane proton channel. CF(1) has five subunits: alpha(3), beta(3), gamma(1), delta(1), epsilon(1). CF(0) has four main subunits: a(1), b(1), b'(1) and c(9-12).

Its subcellular location is the cell inner membrane. It carries out the reaction ATP + H2O + 4 H(+)(in) = ADP + phosphate + 5 H(+)(out). Its function is as follows. Produces ATP from ADP in the presence of a proton gradient across the membrane. The catalytic sites are hosted primarily by the beta subunits. The protein is ATP synthase subunit beta of Jannaschia sp. (strain CCS1).